The following is a 317-amino-acid chain: MDFEASAKILTTPVKGAKIVSNMTVDELVREYAGCAFGAGRLAKAVDIYYEMLASEKTTKFFGLAGAMTPAGMRNIIADLIRDGYIDVLVTTGANMVHDTVEALGLHHYKGSDCTNDIQLRHECIDRIYDVYLPDQHFTDLEEFLQGVYAGLPQEKLSIRQVLTEIGKNLDDDSSILKTAAEMGVPVYCPALQDSVIGLQAWLYKEGNPLHVDAFADMHEFMEICFETESAGAMLLGGGVPKNYILQSMLVTPRSFDYAIQLTMDHPETGGLSGATLDEAQSWGKVGENAKSVTVYADSTITLPLIVSAVRTRLSKR.

Catalysis depends on lysine 285, which acts as the Nucleophile.

Belongs to the deoxyhypusine synthase family. NAD(+) serves as cofactor.

It catalyses the reaction [eIF5A protein]-L-lysine + spermidine = [eIF5A protein]-deoxyhypusine + propane-1,3-diamine. It participates in protein modification; eIF5A hypusination. Functionally, catalyzes the NAD-dependent oxidative cleavage of spermidine and the subsequent transfer of the butylamine moiety of spermidine to the epsilon-amino group of a specific lysine residue of the eIF-5A precursor protein to form the intermediate deoxyhypusine residue. The protein is Probable deoxyhypusine synthase (dys) of Methanosarcina thermophila.